Here is a 290-residue protein sequence, read N- to C-terminus: Ribosomal protein L11 methyltransferase (290 aa).

Thr135, Gly158, Asp180, and Asn227 together coordinate S-adenosyl-L-methionine.

Belongs to the methyltransferase superfamily. PrmA family.

The protein localises to the cytoplasm. The enzyme catalyses L-lysyl-[protein] + 3 S-adenosyl-L-methionine = N(6),N(6),N(6)-trimethyl-L-lysyl-[protein] + 3 S-adenosyl-L-homocysteine + 3 H(+). Its function is as follows. Methylates ribosomal protein L11. In Chelativorans sp. (strain BNC1), this protein is Ribosomal protein L11 methyltransferase.